The primary structure comprises 306 residues: Acetylglutamate kinase (306 aa).

Substrate is bound by residues 79–80, Arg101, and Asn203; that span reads GG.

The protein belongs to the acetylglutamate kinase family. ArgB subfamily.

The protein resides in the cytoplasm. It catalyses the reaction N-acetyl-L-glutamate + ATP = N-acetyl-L-glutamyl 5-phosphate + ADP. Its pathway is amino-acid biosynthesis; L-arginine biosynthesis; N(2)-acetyl-L-ornithine from L-glutamate: step 2/4. Catalyzes the ATP-dependent phosphorylation of N-acetyl-L-glutamate. This is Acetylglutamate kinase from Polaromonas naphthalenivorans (strain CJ2).